The following is a 576-amino-acid chain: Urease subunit alpha (576 aa).

The Urease domain occupies 132–576 (GGIDTHIHFI…LPMAQRYFLF (445 aa)). Positions 137, 139, and 220 each coordinate Ni(2+). Lysine 220 carries the N6-carboxylysine modification. A substrate-binding site is contributed by histidine 222. 2 residues coordinate Ni(2+): histidine 249 and histidine 275. Residue histidine 323 is the Proton donor of the active site. Aspartate 363 provides a ligand contact to Ni(2+).

The protein belongs to the metallo-dependent hydrolases superfamily. Urease alpha subunit family. In terms of assembly, heterotrimer of UreA (gamma), UreB (beta) and UreC (alpha) subunits. Three heterotrimers associate to form the active enzyme. Requires Ni cation as cofactor. In terms of processing, carboxylation allows a single lysine to coordinate two nickel ions.

Its subcellular location is the cytoplasm. The enzyme catalyses urea + 2 H2O + H(+) = hydrogencarbonate + 2 NH4(+). It participates in nitrogen metabolism; urea degradation; CO(2) and NH(3) from urea (urease route): step 1/1. The protein is Urease subunit alpha of Paenarthrobacter aurescens (strain TC1).